The primary structure comprises 428 residues: Autophagy-related protein 14 (428 aa).

The stretch at 82-143 (QEAIDRTAEI…RKKQLDKVKD (62 aa)) forms a coiled coil.

This sequence belongs to the ATG14 family. As to quaternary structure, component of the autophagy-specific VPS34 PI3-kinase complex I.

The protein localises to the preautophagosomal structure membrane. It localises to the vacuole membrane. Its function is as follows. Required for cytoplasm to vacuole transport (Cvt) and autophagy as a part of the autophagy-specific VPS34 PI3-kinase complex I. This complex is essential to recruit the ATG8-phosphatidylinositol conjugate and the ATG12-ATG5 conjugate to the pre-autophagosomal structure. ATG14 mediates the specific binding of the VPS34 PI3-kinase complex I to the preautophagosomal structure (PAS). Plays a crucial role in hyphal development, conidiogenesis and pathogenicity. Also required for glycogen mobilization, quantity of lipid bodies, and the turgor pressure of appressoria. This chain is Autophagy-related protein 14, found in Pyricularia oryzae (strain 70-15 / ATCC MYA-4617 / FGSC 8958) (Rice blast fungus).